The sequence spans 84 residues: ATP synthase subunit c (84 aa).

Transmembrane regions (helical) follow at residues 9–29 (IFGSVILLAAAALGTAIGFSL) and 54–74 (IVAGLLDAISMIAVGIALLFI).

Belongs to the ATPase C chain family. In terms of assembly, F-type ATPases have 2 components, F(1) - the catalytic core - and F(0) - the membrane proton channel. F(1) has five subunits: alpha(3), beta(3), gamma(1), delta(1), epsilon(1). F(0) has three main subunits: a(1), b(2) and c(10-14). The alpha and beta chains form an alternating ring which encloses part of the gamma chain. F(1) is attached to F(0) by a central stalk formed by the gamma and epsilon chains, while a peripheral stalk is formed by the delta and b chains.

The protein localises to the cell inner membrane. Its function is as follows. F(1)F(0) ATP synthase produces ATP from ADP in the presence of a proton or sodium gradient. F-type ATPases consist of two structural domains, F(1) containing the extramembraneous catalytic core and F(0) containing the membrane proton channel, linked together by a central stalk and a peripheral stalk. During catalysis, ATP synthesis in the catalytic domain of F(1) is coupled via a rotary mechanism of the central stalk subunits to proton translocation. In terms of biological role, key component of the F(0) channel; it plays a direct role in translocation across the membrane. A homomeric c-ring of between 10-14 subunits forms the central stalk rotor element with the F(1) delta and epsilon subunits. The protein is ATP synthase subunit c of Histophilus somni (strain 2336) (Haemophilus somnus).